The chain runs to 468 residues: Eukaryotic translation initiation factor 3 subunit M (468 aa).

Residues 40 to 61 form a disordered region; sequence VAPLIEPLRQQEQSEEEPDRKQ. One can recognise a PCI domain in the interval 206–377; the sequence is DLELAQTHVV…SEFLVHRATY (172 aa). Residues 419–468 are disordered; the sequence is QAAAEEVGQGKSGDKGAKGGDRRRNPQQQQQSQPSQPQQAREVELVGGAE. Over residues 430–442 the composition is skewed to basic and acidic residues; it reads SGDKGAKGGDRRR. The segment covering 444–457 has biased composition (low complexity); the sequence is PQQQQQSQPSQPQQ.

The protein belongs to the eIF-3 subunit M family. In terms of assembly, component of the eukaryotic translation initiation factor 3 (eIF-3) complex.

Its subcellular location is the cytoplasm. Component of the eukaryotic translation initiation factor 3 (eIF-3) complex, which is involved in protein synthesis of a specialized repertoire of mRNAs and, together with other initiation factors, stimulates binding of mRNA and methionyl-tRNAi to the 40S ribosome. The eIF-3 complex specifically targets and initiates translation of a subset of mRNAs involved in cell proliferation. In Aspergillus fumigatus (strain CBS 144.89 / FGSC A1163 / CEA10) (Neosartorya fumigata), this protein is Eukaryotic translation initiation factor 3 subunit M.